Consider the following 349-residue polypeptide: Magnesium-protoporphyrin IX monomethyl ester [oxidative] cyclase (349 aa).

Belongs to the AcsF family. Fe cation serves as cofactor.

Its subcellular location is the plastid. It localises to the chloroplast. It carries out the reaction Mg-protoporphyrin IX 13-monomethyl ester + 3 NADPH + 3 O2 + 2 H(+) = 3,8-divinyl protochlorophyllide a + 3 NADP(+) + 5 H2O. The protein operates within porphyrin-containing compound metabolism; chlorophyll biosynthesis (light-independent). In terms of biological role, catalyzes the formation of the isocyclic ring in chlorophyll biosynthesis. Mediates the cyclase reaction, which results in the formation of divinylprotochlorophyllide (Pchlide) characteristic of all chlorophylls from magnesium-protoporphyrin IX 13-monomethyl ester (MgPMME). The chain is Magnesium-protoporphyrin IX monomethyl ester [oxidative] cyclase from Porphyra purpurea (Red seaweed).